We begin with the raw amino-acid sequence, 108 residues long: Replication restart protein PriB (108 aa).

The 101-residue stretch at 8 to 108 (VDNRFSLIGK…LHAEQIEFIE (101 aa)) folds into the SSB domain.

It belongs to the PriB family. As to quaternary structure, homodimer. Interacts with PriA and DnaT. Component of the replication restart primosome. Primosome assembly occurs via a 'hand-off' mechanism. PriA binds to replication forks, subsequently PriB then DnaT bind; DnaT then displaces ssDNA to generate the helicase loading substrate.

Involved in the restart of stalled replication forks, which reloads the replicative helicase on sites other than the origin of replication; the PriA-PriB pathway is the major replication restart pathway. During primosome assembly it facilitates complex formation between PriA and DnaT on DNA; stabilizes PriA on DNA. Stimulates the DNA unwinding activity of PriA helicase. This Histophilus somni (strain 129Pt) (Haemophilus somnus) protein is Replication restart protein PriB.